A 366-amino-acid chain; its full sequence is tRNA/tmRNA (uracil-C(5))-methyltransferase (366 aa).

Positions 190, 218, 223, 239, and 299 each coordinate S-adenosyl-L-methionine. Catalysis depends on Cys-324, which acts as the Nucleophile. The active-site Proton acceptor is Glu-358.

It belongs to the class I-like SAM-binding methyltransferase superfamily. RNA M5U methyltransferase family. TrmA subfamily.

The catalysed reaction is uridine(54) in tRNA + S-adenosyl-L-methionine = 5-methyluridine(54) in tRNA + S-adenosyl-L-homocysteine + H(+). It carries out the reaction uridine(341) in tmRNA + S-adenosyl-L-methionine = 5-methyluridine(341) in tmRNA + S-adenosyl-L-homocysteine + H(+). Its function is as follows. Dual-specificity methyltransferase that catalyzes the formation of 5-methyluridine at position 54 (m5U54) in all tRNAs, and that of position 341 (m5U341) in tmRNA (transfer-mRNA). The sequence is that of tRNA/tmRNA (uracil-C(5))-methyltransferase from Salmonella agona (strain SL483).